The following is a 156-amino-acid chain: Ribosomal RNA large subunit methyltransferase H (156 aa).

S-adenosyl-L-methionine is bound by residues L73, G104, and 123-128 (LSALTL).

This sequence belongs to the RNA methyltransferase RlmH family. In terms of assembly, homodimer.

It is found in the cytoplasm. The catalysed reaction is pseudouridine(1915) in 23S rRNA + S-adenosyl-L-methionine = N(3)-methylpseudouridine(1915) in 23S rRNA + S-adenosyl-L-homocysteine + H(+). Specifically methylates the pseudouridine at position 1915 (m3Psi1915) in 23S rRNA. This Shewanella pealeana (strain ATCC 700345 / ANG-SQ1) protein is Ribosomal RNA large subunit methyltransferase H.